The following is a 409-amino-acid chain: NDP-glycosyltransferase ltbB (409 aa).

The N-linked (GlcNAc...) asparagine glycan is linked to N36. The chain crosses the membrane as a helical span at residues 319–339 (IWAFAYVWAWLQTLYTAPWIA).

The protein belongs to the GT2 glycosyltransferase family.

It localises to the membrane. Its pathway is secondary metabolite biosynthesis. Functionally, NDP-glycosyltransferase; part of the gene cluster that mediates the biosynthesis of luteodienoside A, a glycosylated polyketide consisting of an unusual 1-O-beta-D-glucopyranosyl-myo-inositol (glucinol) ester of 3-hydroxy-2,2,4-trimethylocta-4,6-dienoic acid. LtbB likely serves as a glucinol synthase by transferring D-glucose to myo-inositol using NDP-glucose as a substrate. The ltbA carnitine O-acyltransferase (cAT) domain uses glucinol produced by the glycosyltransferase ltbB as an offloading substrate to release luteodienoside A from the HR-PKS. Since ltbA and ltbB are sufficient for the biosynthesis of luteodienoside A, the functions of the methyltransferase ltbC and the FAD-binding monooxygenase ltbD within the pathway remain obscur. The sequence is that of NDP-glycosyltransferase ltbB from Aspergillus luteorubrus.